A 64-amino-acid polypeptide reads, in one-letter code: Alpha-like toxin Lqh6 (64 aa).

An LCN-type CS-alpha/beta domain is found at 2-63 (RDGYIAQPEN…GIIVDGVKCH (62 aa)). Disulfide bonds link Cys12–Cys62, Cys16–Cys34, Cys20–Cys44, and Cys24–Cys46. Position 64 is a lysine amide (Lys64).

It belongs to the long (4 C-C) scorpion toxin superfamily. Sodium channel inhibitor family. Alpha subfamily. In terms of tissue distribution, expressed by the venom gland.

The protein localises to the secreted. In terms of biological role, alpha toxins bind voltage-independently at site-3 of sodium channels (Nav) and inhibit the inactivation of the activated channels, thereby blocking neuronal transmission. This toxin is highly toxic to insects and mice, and inhibits the binding of alpha-toxin to cockroach neuronal membranes. In Leiurus hebraeus (Hebrew deathstalker scorpion), this protein is Alpha-like toxin Lqh6.